Consider the following 380-residue polypeptide: Cytoplasmic protein NCK2 (380 aa).

Thr2 carries the post-translational modification N-acetylthreonine. The SH3 1 domain occupies 2–61 (TEEVIVIAKWDYTAQQDQELDIKKNERLWLLDDSKTWWRVRNAANRTGYVPSNYVERKNS). The disordered stretch occupies residues 79-102 (KTRRKTSARDASPTPSTDAEYPAN). Ser90 is modified (phosphoserine). Thr92 is subject to Phosphothreonine. Position 94 is a phosphoserine (Ser94). The residue at position 110 (Tyr110) is a Phosphotyrosine. SH3 domains lie at 111-170 (DLNI…EEVD) and 195-257 (RVLH…VLSD). The SH2 domain maps to 285–380 (WYYGNVTRHQ…EKLYLVRALQ (96 aa)).

In terms of assembly, interacts with DOCK1, LIMS1 and TGFB1I1. Part of a complex containing PPP1R15B, PP1 and NCK2. Interacts with FASLG. Interacts with AXL. Interacts with PAK1, PKN2 and SOS1. Interacts (via SH2 domain) with EGFR. Interacts (via SH2 domain) with DDR1. Interacts with IRS1. In terms of processing, phosphorylated. As to expression, ubiquitous.

The protein localises to the cytoplasm. It is found in the endoplasmic reticulum. In terms of biological role, adapter protein which associates with tyrosine-phosphorylated growth factor receptors or their cellular substrates. Maintains low levels of EIF2S1 phosphorylation by promoting its dephosphorylation by PP1. Plays a role in ELK1-dependent transcriptional activation in response to activated Ras signaling. The protein is Cytoplasmic protein NCK2 (NCK2) of Homo sapiens (Human).